A 203-amino-acid polypeptide reads, in one-letter code: Large ribosomal subunit protein uL13 (203 aa).

The residue at position 2 (Ala2) is an N-acetylalanine. Arg59 is subject to Citrulline. Ser77 is subject to Phosphoserine; by ZIPK/DAPK3. A Citrulline modification is found at Arg140. The residue at position 191 (Lys191) is an N6-acetyllysine.

This sequence belongs to the universal ribosomal protein uL13 family. In terms of assembly, component of the 60S ribosome. Component of the GAIT complex. Interacts with EIF4G1. Post-translationally, phosphorylation at Ser-77 upon interferon-gamma treatment in macrophages involves a DAPK1-DAPK3 kinase cascade and is causing release from the ribosome, association with the GAIT complex and subsequent involvement in transcript-selective translation inhibition. In terms of processing, citrullinated by PADI4.

It is found in the cytoplasm. Associated with ribosomes but is not required for canonical ribosome function and has extra-ribosomal functions. Component of the GAIT (gamma interferon-activated inhibitor of translation) complex which mediates interferon-gamma-induced transcript-selective translation inhibition in inflammation processes. Upon interferon-gamma activation and subsequent phosphorylation dissociates from the ribosome and assembles into the GAIT complex which binds to stem loop-containing GAIT elements in the 3'-UTR of diverse inflammatory mRNAs (such as ceruplasmin) and suppresses their translation. In the GAIT complex interacts with m7G cap-bound eIF4G at or near the eIF3-binding site and blocks the recruitment of the 43S ribosomal complex. Involved in methylation of rRNA. This Mus musculus (Mouse) protein is Large ribosomal subunit protein uL13 (Rpl13a).